The sequence spans 624 residues: Actin-related protein 8 (624 aa).

Methionine 1 bears the N-acetylmethionine mark. Positions 1 to 25 are enriched in basic and acidic residues; sequence MTQAEKGDTENGKEKGGEKEKEQRG. The tract at residues 1–29 is disordered; sequence MTQAEKGDTENGKEKGGEKEKEQRGVKRP. 2 residues coordinate ATP: serine 55 and threonine 56. Serine 132 carries the phosphoserine modification. Position 283–286 (283–286) interacts with ATP; sequence DVGD. At serine 412 the chain carries Phosphoserine. Residues 430–462 are disordered; the sequence is SKQEQSAKATADRKSASKPIGFEGDLRGQSSDL.

This sequence belongs to the actin family. ARP8 subfamily. As to quaternary structure, component of the chromatin remodeling INO80 complex; specifically part of a complex module associated with the DBINO domain of INO80. Interacts with ACTR5; the interaction is observed in asynchronous (interphase) cells but not in metaphase-arrested cells indicative for a possible dissociation of the INO80 complex in mitotic cells. Exists as monomers and dimers, but the dimer is most probably the biologically relevant form required for stable interactions with histones that exploits the twofold symmetry of the nucleosome core.

It localises to the nucleus. It is found in the chromosome. Its function is as follows. Plays an important role in the functional organization of mitotic chromosomes. Exhibits low basal ATPase activity, and unable to polymerize. Functionally, proposed core component of the chromatin remodeling INO80 complex which is involved in transcriptional regulation, DNA replication and probably DNA repair. Required for the recruitment of INO80 (and probably the INO80 complex) to sites of DNA damage. Strongly prefer nucleosomes and H3-H4 tetramers over H2A-H2B dimers, suggesting it may act as a nucleosome recognition module within the complex. This Homo sapiens (Human) protein is Actin-related protein 8 (ACTR8).